A 226-amino-acid chain; its full sequence is Thioredoxin domain-containing protein 9 (226 aa).

The region spanning 75 to 180 is the Thioredoxin domain; that stretch reads EIGSERDFFQ…TTETLEWRLG (106 aa). S188, S221, and S223 each carry phosphoserine.

As to quaternary structure, forms ternary complexes with the chaperonin TCP1 complex, spanning the cylindrical chaperonin cavity and contacting at least 2 subunits.

It localises to the cytoplasm. The protein localises to the nucleus. It is found in the cytoskeleton. Its subcellular location is the microtubule organizing center. The protein resides in the centrosome. It localises to the midbody. In terms of biological role, significantly diminishes the chaperonin TCP1 complex ATPase activity, thus negatively impacts protein folding, including that of actin or tubulin. This is Thioredoxin domain-containing protein 9 (Txndc9) from Rattus norvegicus (Rat).